The chain runs to 235 residues: Purine nucleoside phosphorylase DeoD-type (235 aa).

His4 is an a purine D-ribonucleoside binding site. Residues Gly20, Arg24, Arg43, and 87-90 contribute to the phosphate site; that span reads RVGT. A purine D-ribonucleoside-binding positions include Glu162, 179–181, and 203–204; these read EME and SD. Asp204 serves as the catalytic Proton donor.

This sequence belongs to the PNP/UDP phosphorylase family. Homohexamer; trimer of homodimers.

It catalyses the reaction a purine D-ribonucleoside + phosphate = a purine nucleobase + alpha-D-ribose 1-phosphate. The enzyme catalyses a purine 2'-deoxy-D-ribonucleoside + phosphate = a purine nucleobase + 2-deoxy-alpha-D-ribose 1-phosphate. In terms of biological role, catalyzes the reversible phosphorolytic breakdown of the N-glycosidic bond in the beta-(deoxy)ribonucleoside molecules, with the formation of the corresponding free purine bases and pentose-1-phosphate. The protein is Purine nucleoside phosphorylase DeoD-type of Bacillus cereus (strain ZK / E33L).